The sequence spans 345 residues: Heat-inducible transcription repressor HrcA (345 aa).

It belongs to the HrcA family.

In terms of biological role, negative regulator of class I heat shock genes (grpE-dnaK-dnaJ and groELS operons). Prevents heat-shock induction of these operons. This is Heat-inducible transcription repressor HrcA from Dehalococcoides mccartyi (strain ATCC BAA-2266 / KCTC 15142 / 195) (Dehalococcoides ethenogenes (strain 195)).